We begin with the raw amino-acid sequence, 252 residues long: Cell division protein ZapD (252 aa).

The protein belongs to the ZapD family. In terms of assembly, interacts with FtsZ.

It localises to the cytoplasm. Its function is as follows. Cell division factor that enhances FtsZ-ring assembly. Directly interacts with FtsZ and promotes bundling of FtsZ protofilaments, with a reduction in FtsZ GTPase activity. In Ralstonia pickettii (strain 12J), this protein is Cell division protein ZapD.